A 461-amino-acid chain; its full sequence is Epidermin leader peptide-processing serine protease EpiP (461 aa).

The signal sequence occupies residues methionine 1–alanine 23. The region spanning glutamine 121–leucine 459 is the Peptidase S8 domain. Catalysis depends on charge relay system residues aspartate 149, histidine 194, and serine 402.

It belongs to the peptidase S8 family.

It participates in antibiotic biosynthesis; epidermin biosynthesis. In terms of biological role, protease which cleaves the matured lantibiotic from the modified prepeptide. This chain is Epidermin leader peptide-processing serine protease EpiP (epiP), found in Staphylococcus epidermidis.